The chain runs to 274 residues: Urease accessory protein UreD (274 aa).

The protein belongs to the UreD family. UreD, UreF and UreG form a complex that acts as a GTP-hydrolysis-dependent molecular chaperone, activating the urease apoprotein by helping to assemble the nickel containing metallocenter of UreC. The UreE protein probably delivers the nickel.

The protein localises to the cytoplasm. In terms of biological role, required for maturation of urease via the functional incorporation of the urease nickel metallocenter. The polypeptide is Urease accessory protein UreD (Thermosynechococcus vestitus (strain NIES-2133 / IAM M-273 / BP-1)).